We begin with the raw amino-acid sequence, 321 residues long: Ribonuclease Z (321 aa).

Zn(2+)-binding residues include His62, His64, Asp66, His67, His139, Asp209, and His268. Asp66 functions as the Proton acceptor in the catalytic mechanism.

The protein belongs to the RNase Z family. In terms of assembly, homodimer. The cofactor is Zn(2+).

It catalyses the reaction Endonucleolytic cleavage of RNA, removing extra 3' nucleotides from tRNA precursor, generating 3' termini of tRNAs. A 3'-hydroxy group is left at the tRNA terminus and a 5'-phosphoryl group is left at the trailer molecule.. Zinc phosphodiesterase, which displays some tRNA 3'-processing endonuclease activity. Probably involved in tRNA maturation, by removing a 3'-trailer from precursor tRNA. This chain is Ribonuclease Z, found in Pseudomonas putida (strain W619).